Reading from the N-terminus, the 317-residue chain is MKVLWAALLVTFLAGCQAKVEQAVETEPEPELRQQTEWQSGQRWELALGRFWDYLRWVQTLSEQVQEELLSSQVTQELRALMDETMKELKAYKSELEEQLTPVAEETRARLSKELQAAQARLGADMEDVCGRLVQYRGEVQAMLGQSTEELRVRLASHLRKLRKRLLRDADDLQKRLAVYQAGAREGAERGLSAIRERLGPLVEQGRVRAATVGSLAGQPLQERAQAWGERLRARMEEMGSRTRDRLDEVKEQVAEVRAKLEEQAQQIRLQAEAFQARLKSWFEPLVEDMQRQWAGLVEKVQAAVGTSAAPVPSDNH.

Positions 1–18 are cleaved as a signal peptide; it reads MKVLWAALLVTFLAGCQA. O-linked (GalNAc...) threonine glycosylation is found at T26 and T36. 8 consecutive repeat copies span residues 80–101, 102–123, 124–145, 146–167, 168–189, 190–211, 212–233, and 234–255. The tract at residues 80–255 is 8 X 22 AA approximate tandem repeats; sequence ALMDETMKEL…RLDEVKEQVA (176 aa). K93 carries an N-linked (Glc) (glycation) lysine glycan. M143 bears the Methionine sulfoxide mark. At S147 the chain carries Phosphoserine; by FAM20C. The tract at residues 158–168 is LDL and other lipoprotein receptors binding; the sequence is HLRKLRKRLLR. Residue 162–165 coordinates heparin; it reads LRKR. A lipid-binding and lipoprotein association region spans residues 210–290; the sequence is AATVGSLAGQ…SWFEPLVEDM (81 aa). The O-linked (GalNAc...) threonine glycan is linked to T212. 229-236 is a binding site for heparin; that stretch reads GERLRARM. Positions 266-317 are homooligomerization; it reads QQIRLQAEAFQARLKSWFEPLVEDMQRQWAGLVEKVQAAVGTSAAPVPSDNH. The tract at residues 278–290 is specificity for association with VLDL; that stretch reads RLKSWFEPLVEDM. The O-linked (GalNAc...) threonine glycan is linked to T307. Residues S308 and S314 are each glycosylated (O-linked (GalNAc...) serine).

Belongs to the apolipoprotein A1/A4/E family. In terms of assembly, homotetramer. May interact with ABCA1; functionally associated with ABCA1 in the biogenesis of HDLs. May interact with APP/A4 amyloid-beta peptide; the interaction is extremely stable in vitro but its physiological significance is unclear. May interact with MAPT. May interact with MAP2. In the cerebrospinal fluid, interacts with secreted SORL1. Interacts with PMEL; this allows the loading of PMEL luminal fragment on ILVs to induce fibril nucleation. (Microbial infection) Interacts with hepatitis C virus (HCV) envelope glycoprotein E2; this interaction is required for HCV infectivity and production. Post-translationally, APOE exists as multiple glycosylated and sialylated glycoforms within cells and in plasma. The extent of glycosylation and sialylation are tissue and context specific. Plasma APOE undergoes desialylation and is less glycosylated and sialylated than the cellular form. Glycosylation is not required for proper expression and secretion. O-glycosylated with core 1 or possibly core 8 glycans. Thr-307 and Ser-314 are minor glycosylation sites compared to Ser-308. In terms of processing, glycated in plasma VLDL of normal subjects, and of hyperglycemic diabetic patients at a higher level (2-3 fold). Phosphorylated by FAM20C in the extracellular medium. Post-translationally, undergoes C-terminal proteolytic processing in neurons. C-terminally truncated APOE has a tendency to form neurotoxic intracellular neurofibrillary tangle-like inclusions in neurons. In terms of tissue distribution, produced by several tissues and cell types and mainly found associated with lipid particles in the plasma, the interstitial fluid and lymph. Mainly synthesized by liver hepatocytes. Significant quantities are also produced in brain, mainly by astrocytes and glial cells in the cerebral cortex, but also by neurons in frontal cortex and hippocampus. It is also expressed by cells of the peripheral nervous system. Also expressed by adrenal gland, testis, ovary, skin, kidney, spleen and adipose tissue and macrophages in various tissues.

The protein localises to the secreted. It localises to the extracellular space. It is found in the extracellular matrix. The protein resides in the extracellular vesicle. Its subcellular location is the endosome. The protein localises to the multivesicular body. Its function is as follows. APOE is an apolipoprotein, a protein associating with lipid particles, that mainly functions in lipoprotein-mediated lipid transport between organs via the plasma and interstitial fluids. APOE is a core component of plasma lipoproteins and is involved in their production, conversion and clearance. Apolipoproteins are amphipathic molecules that interact both with lipids of the lipoprotein particle core and the aqueous environment of the plasma. As such, APOE associates with chylomicrons, chylomicron remnants, very low density lipoproteins (VLDL) and intermediate density lipoproteins (IDL) but shows a preferential binding to high-density lipoproteins (HDL). It also binds a wide range of cellular receptors including the LDL receptor/LDLR, the LDL receptor-related proteins LRP1, LRP2 and LRP8 and the very low-density lipoprotein receptor/VLDLR that mediate the cellular uptake of the APOE-containing lipoprotein particles. Finally, APOE also has a heparin-binding activity and binds heparan-sulfate proteoglycans on the surface of cells, a property that supports the capture and the receptor-mediated uptake of APOE-containing lipoproteins by cells. A main function of APOE is to mediate lipoprotein clearance through the uptake of chylomicrons, VLDLs, and HDLs by hepatocytes. APOE is also involved in the biosynthesis by the liver of VLDLs as well as their uptake by peripheral tissues ensuring the delivery of triglycerides and energy storage in muscle, heart and adipose tissues. By participating in the lipoprotein-mediated distribution of lipids among tissues, APOE plays a critical role in plasma and tissues lipid homeostasis. APOE is also involved in two steps of reverse cholesterol transport, the HDLs-mediated transport of cholesterol from peripheral tissues to the liver, and thereby plays an important role in cholesterol homeostasis. First, it is functionally associated with ABCA1 in the biogenesis of HDLs in tissues. Second, it is enriched in circulating HDLs and mediates their uptake by hepatocytes. APOE also plays an important role in lipid transport in the central nervous system, regulating neuron survival and sprouting. APOE is also involved in innate and adaptive immune responses, controlling for instance the survival of myeloid-derived suppressor cells. Binds to the immune cell receptor LILRB4. APOE may also play a role in transcription regulation through a receptor-dependent and cholesterol-independent mechanism, that activates MAP3K12 and a non-canonical MAPK signal transduction pathway that results in enhanced AP-1-mediated transcription of APP. (Microbial infection) Through its interaction with HCV envelope glycoprotein E2, participates in the attachment of HCV to HSPGs and other receptors (LDLr, VLDLr, and SR-B1) on the cell surface and to the assembly, maturation and infectivity of HCV viral particles. This interaction is probably promoted via the up-regulation of cellular autophagy by the virus. This chain is Apolipoprotein E, found in Homo sapiens (Human).